We begin with the raw amino-acid sequence, 103 residues long: O2 contryphan Vc1 (103 aa).

Residues 1-23 form the signal peptide; the sequence is MGKLTILFLVAAALLSTQVMVQG. Residues 24-67 constitute a propeptide that is removed on maturation; it reads DGAHERTEAEEPQHHGAKRQDGTGGYPVDDVDMMQRIFRTPLKR. Positions 25 to 44 are enriched in basic and acidic residues; it reads GAHERTEAEEPQHHGAKRQD. The tract at residues 25 to 50 is disordered; that stretch reads GAHERTEAEEPQHHGAKRQDGTGGYP. Pyrrolidone carboxylic acid is present on glutamine 68. Residues cysteine 70 and cysteine 83 are joined by a disulfide bond. The propeptide occupies 99–103; sequence RRGRQ.

It belongs to the O2 superfamily. Pyrrolidone carboxylic acid at position 1 has no significant effect on the structure of contryphan-Vc1. As to expression, expressed by the venom gland.

It localises to the secreted. Unknown. Intracranial injection of the peptide into mice does not produce toxic effects. In addition, the peptide does not produce any observable changes to normal or depolarization-induced intracellular calcium levels in mouse dorsal root ganglion cells. The chain is O2 contryphan Vc1 from Conus victoriae (Queen Victoria cone).